The primary structure comprises 71 residues: Small integral membrane protein 31 (71 aa).

A helical membrane pass occupies residues 8–28; sequence LEMAFILLAFVIFSLFTLASI. The interval 31–71 is disordered; the sequence is TPDDSNEEEEHEKKGREKKRKKSEKKKNCSEEEHRIEAVEL. The span at 46–55 shows a compositional bias: basic residues; the sequence is REKKRKKSEK. The segment covering 56-71 has biased composition (basic and acidic residues); the sequence is KKNCSEEEHRIEAVEL. Residue asparagine 58 is glycosylated (N-linked (GlcNAc...) asparagine).

The protein localises to the membrane. The protein is Small integral membrane protein 31 of Homo sapiens (Human).